Here is a 365-residue protein sequence, read N- to C-terminus: tRNA 2-selenouridine synthase (365 aa).

Residues 15-138 (LVNDHPIMDA…MRQFLIETID (124 aa)) enclose the Rhodanese domain. Catalysis depends on Cys98, which acts as the S-selanylcysteine intermediate.

This sequence belongs to the SelU family. In terms of assembly, monomer.

It carries out the reaction 5-methylaminomethyl-2-thiouridine(34) in tRNA + selenophosphate + (2E)-geranyl diphosphate + H2O + H(+) = 5-methylaminomethyl-2-selenouridine(34) in tRNA + (2E)-thiogeraniol + phosphate + diphosphate. The enzyme catalyses 5-methylaminomethyl-2-thiouridine(34) in tRNA + (2E)-geranyl diphosphate = 5-methylaminomethyl-S-(2E)-geranyl-thiouridine(34) in tRNA + diphosphate. It catalyses the reaction 5-methylaminomethyl-S-(2E)-geranyl-thiouridine(34) in tRNA + selenophosphate + H(+) = 5-methylaminomethyl-2-(Se-phospho)selenouridine(34) in tRNA + (2E)-thiogeraniol. The catalysed reaction is 5-methylaminomethyl-2-(Se-phospho)selenouridine(34) in tRNA + H2O = 5-methylaminomethyl-2-selenouridine(34) in tRNA + phosphate. Involved in the post-transcriptional modification of the uridine at the wobble position (U34) of tRNA(Lys), tRNA(Glu) and tRNA(Gln). Catalyzes the conversion of 2-thiouridine (S2U-RNA) to 2-selenouridine (Se2U-RNA). Acts in a two-step process involving geranylation of 2-thiouridine (S2U) to S-geranyl-2-thiouridine (geS2U) and subsequent selenation of the latter derivative to 2-selenouridine (Se2U) in the tRNA chain. The polypeptide is tRNA 2-selenouridine synthase (Shewanella pealeana (strain ATCC 700345 / ANG-SQ1)).